A 297-amino-acid chain; its full sequence is uncharacterized protein (297 aa).

The stretch at R128–F156 forms a coiled coil.

This is an uncharacterized protein from Bacillus subtilis (strain 168).